The chain runs to 188 residues: dCTP deaminase (188 aa).

Residues 111 to 116 (KSTYAR), 135 to 137 (TLE), Q156, Y170, and Q180 contribute to the dCTP site. E137 acts as the Proton donor/acceptor in catalysis.

The protein belongs to the dCTP deaminase family. As to quaternary structure, homotrimer.

It catalyses the reaction dCTP + H2O + H(+) = dUTP + NH4(+). It participates in pyrimidine metabolism; dUMP biosynthesis; dUMP from dCTP (dUTP route): step 1/2. Its function is as follows. Catalyzes the deamination of dCTP to dUTP. This Ralstonia pickettii (strain 12J) protein is dCTP deaminase.